Consider the following 654-residue polypeptide: 4-hydroxy-3-methylbut-2-en-1-yl diphosphate synthase (flavodoxin) (654 aa).

[4Fe-4S] cluster is bound by residues cysteine 557, cysteine 560, cysteine 591, and glutamate 598.

The protein belongs to the IspG family. It depends on [4Fe-4S] cluster as a cofactor.

The enzyme catalyses (2E)-4-hydroxy-3-methylbut-2-enyl diphosphate + oxidized [flavodoxin] + H2O + 2 H(+) = 2-C-methyl-D-erythritol 2,4-cyclic diphosphate + reduced [flavodoxin]. Its pathway is isoprenoid biosynthesis; isopentenyl diphosphate biosynthesis via DXP pathway; isopentenyl diphosphate from 1-deoxy-D-xylulose 5-phosphate: step 5/6. In terms of biological role, converts 2C-methyl-D-erythritol 2,4-cyclodiphosphate (ME-2,4cPP) into 1-hydroxy-2-methyl-2-(E)-butenyl 4-diphosphate. This is 4-hydroxy-3-methylbut-2-en-1-yl diphosphate synthase (flavodoxin) from Protochlamydia amoebophila (strain UWE25).